Consider the following 122-residue polypeptide: Large ribosomal subunit protein uL24 (122 aa).

It belongs to the universal ribosomal protein uL24 family. As to quaternary structure, part of the 50S ribosomal subunit.

Functionally, one of two assembly initiator proteins, it binds directly to the 5'-end of the 23S rRNA, where it nucleates assembly of the 50S subunit. In terms of biological role, located at the polypeptide exit tunnel on the outside of the subunit. The protein is Large ribosomal subunit protein uL24 of Pyrobaculum arsenaticum (strain DSM 13514 / JCM 11321 / PZ6).